The sequence spans 132 residues: Phosphoribosyl-AMP cyclohydrolase (132 aa).

A Mg(2+)-binding site is contributed by Asp-79. Cys-80 is a binding site for Zn(2+). Residues Asp-81 and Asp-83 each coordinate Mg(2+). The Zn(2+) site is built by Cys-100 and Cys-107.

It belongs to the PRA-CH family. As to quaternary structure, homodimer. Mg(2+) is required as a cofactor. The cofactor is Zn(2+).

Its subcellular location is the cytoplasm. The catalysed reaction is 1-(5-phospho-beta-D-ribosyl)-5'-AMP + H2O = 1-(5-phospho-beta-D-ribosyl)-5-[(5-phospho-beta-D-ribosylamino)methylideneamino]imidazole-4-carboxamide. Its pathway is amino-acid biosynthesis; L-histidine biosynthesis; L-histidine from 5-phospho-alpha-D-ribose 1-diphosphate: step 3/9. Functionally, catalyzes the hydrolysis of the adenine ring of phosphoribosyl-AMP. This Acidovorax sp. (strain JS42) protein is Phosphoribosyl-AMP cyclohydrolase.